The chain runs to 649 residues: Replication protein E1 (649 aa).

Residues 87 to 89 (KRK) carry the Nuclear localization signal motif. Ser-93 and Ser-107 each carry phosphoserine; by host. The short motif at 106–115 (ISPRLKAICI) is the Nuclear export signal element. Residues 186–352 (ICQTPLTNIL…QTVLQHSFND (167 aa)) form a DNA-binding region region. An SF3 helicase domain is found at 451–601 (VEFMSFLTAL…FPFDENGNPV (151 aa)). Residue 477-484 (GAANTGKS) coordinates ATP. Lys-558 is covalently cross-linked (Glycyl lysine isopeptide (Lys-Gly) (interchain with G-Cter in SUMO)). The segment at 624 to 649 (EDEDKENDGDSLPTFKCVSGQNTNTL) is disordered.

This sequence belongs to the papillomaviridae E1 protein family. Can form hexamers. Interacts with E2 protein; this interaction increases E1 DNA binding specificity. Interacts with host DNA polymerase subunit POLA2. Interacts with host single stranded DNA-binding protein RPA1. Interacts with host TOP1; this interaction stimulates the enzymatic activity of TOP1. In terms of processing, phosphorylated. Post-translationally, sumoylated.

It localises to the host nucleus. It carries out the reaction Couples ATP hydrolysis with the unwinding of duplex DNA by translocating in the 3'-5' direction.. The catalysed reaction is ATP + H2O = ADP + phosphate + H(+). Its function is as follows. ATP-dependent DNA 3'-5' helicase required for initiation of viral DNA replication. It forms a complex with the viral E2 protein. The E1-E2 complex binds to the replication origin which contains binding sites for both proteins. During the initial step, a dimer of E1 interacts with a dimer of protein E2 leading to a complex that binds the viral origin of replication with high specificity. Then, a second dimer of E1 displaces the E2 dimer in an ATP-dependent manner to form the E1 tetramer. Following this, two E1 monomers are added to each half of the site, which results in the formation of two E1 trimers on the viral ori. Subsequently, two hexamers will be created. The double hexamer acts as a bi-directional helicase machinery and unwinds the viral DNA and then recruits the host DNA polymerase to start replication. This is Replication protein E1 from Human papillomavirus type 16.